Consider the following 711-residue polypeptide: Polyribonucleotide nucleotidyltransferase (711 aa).

2 residues coordinate Mg(2+): D490 and D496. Residues 556–615 (PRIETMQVPTDKIREVIGSGGKVIREIVEVSGAKVDINDDGVIKIASANGEAIQKAYDMI) enclose the KH domain. The 69-residue stretch at 625–693 (GAVYTGKVVK…DRGKVRLSMK (69 aa)) folds into the S1 motif domain.

It belongs to the polyribonucleotide nucleotidyltransferase family. It depends on Mg(2+) as a cofactor.

It is found in the cytoplasm. The enzyme catalyses RNA(n+1) + phosphate = RNA(n) + a ribonucleoside 5'-diphosphate. Its function is as follows. Involved in mRNA degradation. Catalyzes the phosphorolysis of single-stranded polyribonucleotides processively in the 3'- to 5'-direction. This Ruegeria sp. (strain TM1040) (Silicibacter sp.) protein is Polyribonucleotide nucleotidyltransferase.